Reading from the N-terminus, the 185-residue chain is Class I hydrophobin SC6 (185 aa).

An N-terminal signal peptide occupies residues 1–17 (MVSRVLALISVAMLVGA). The disordered stretch occupies residues 70 to 104 (HIPEVTGSSTEEATSSSTWSGASSKPTDSAPTQCN). The span at 75-93 (TGSSTEEATSSSTWSGASS) shows a compositional bias: low complexity. Polar residues predominate over residues 94–104 (KPTDSAPTQCN). Cystine bridges form between cysteine 103-cysteine 164, cysteine 110-cysteine 158, cysteine 111-cysteine 144, and cysteine 165-cysteine 178.

It belongs to the fungal hydrophobin family. As to quaternary structure, self-assembles to form functional amyloid fibrils called rodlets. Self-assembly into fibrillar rodlets occurs spontaneously at hydrophobic:hydrophilic interfaces and the rodlets further associate laterally to form amphipathic monolayers.

The protein localises to the secreted. It is found in the cell wall. In terms of biological role, aerial growth, conidiation, and dispersal of filamentous fungi in the environment rely upon a capability of their secreting small amphipathic proteins called hydrophobins (HPBs) with low sequence identity. Class I can self-assemble into an outermost layer of rodlet bundles on aerial cell surfaces, conferring cellular hydrophobicity that supports fungal growth, development and dispersal; whereas Class II form highly ordered films at water-air interfaces through intermolecular interactions but contribute nothing to the rodlet structure. SC6 is a dikaryon-specific class I hydrophobin that contributes to the formation of aerial hyphae and fruiting bodies. This Schizophyllum commune (Split gill fungus) protein is Class I hydrophobin SC6.